Consider the following 185-residue polypeptide: Ribosome-recycling factor (185 aa).

Belongs to the RRF family.

It localises to the cytoplasm. Functionally, responsible for the release of ribosomes from messenger RNA at the termination of protein biosynthesis. May increase the efficiency of translation by recycling ribosomes from one round of translation to another. The sequence is that of Ribosome-recycling factor from Serratia proteamaculans (strain 568).